Reading from the N-terminus, the 315-residue chain is Gamma-hemolysin component C (315 aa).

A signal peptide spans 1-29 (MLKNKILATTLSVSLLAPLANPLLENAKA).

This sequence belongs to the aerolysin family. Toxicity requires sequential binding and synergistic association of a class S and a class F component which form heterooligomeric complexes. HlgC (class S) associates with HlgB (class F) thus forming an CB toxin.

Its function is as follows. Toxin that seems to act by forming pores in the membrane of the cell. Has a hemolytic and a leucotoxic activity. In Staphylococcus aureus (strain Mu50 / ATCC 700699), this protein is Gamma-hemolysin component C (hlgC).